A 382-amino-acid polypeptide reads, in one-letter code: Myb-like transcription factor (382 aa).

Myb-like domains lie at 1-57 (MPRS…RWSK), 58-108 (ITGA…QHCL), and 109-160 (DPSL…ITLF). Acidic residues predominate over residues 194-210 (MSMDASEDGDDAEDDQT). A disordered region spans residues 194–240 (MSMDASEDGDDAEDDQTPDSYTSISTSSFDDILGGSSSSPSAADTMT). Residues 211–240 (PDSYTSISTSSFDDILGGSSSSPSAADTMT) show a composition bias toward polar residues.

Its subcellular location is the nucleus. In terms of biological role, transcription factor; part of the gene cluster that mediates the biosynthesis of 1233A, a natural compound known as an inhibitor of HMG-CoA synthase in the mevalonate pathway and with antibacterial and antifungal activities. Involved in hygromycin B-induced transcriptional control of the cluster. This Fusarium sp protein is Myb-like transcription factor.